Consider the following 550-residue polypeptide: Chaperonin GroEL 1 (550 aa).

ATP-binding positions include 30 to 33 (TLGP), Lys51, 87 to 91 (DGTTT), Gly415, and Asp496.

It belongs to the chaperonin (HSP60) family. Forms a cylinder of 14 subunits composed of two heptameric rings stacked back-to-back. Interacts with the co-chaperonin GroES.

The protein resides in the cytoplasm. It carries out the reaction ATP + H2O + a folded polypeptide = ADP + phosphate + an unfolded polypeptide.. Functionally, together with its co-chaperonin GroES, plays an essential role in assisting protein folding. The GroEL-GroES system forms a nano-cage that allows encapsulation of the non-native substrate proteins and provides a physical environment optimized to promote and accelerate protein folding. This Rhodopseudomonas palustris (strain HaA2) protein is Chaperonin GroEL 1.